A 263-amino-acid chain; its full sequence is tRNA (guanine-N(7)-)-methyltransferase (263 aa).

Positions 1-10 (MLPQDPSTEP) are enriched in polar residues. A disordered region spans residues 1 to 38 (MLPQDPSTEPTPADDAAPVDSAGQASAPSPADPEGVAH). Residues E91, E116, D143, and D166 each coordinate S-adenosyl-L-methionine. D166 is a catalytic residue. K170 is a binding site for substrate. The tract at residues 172-177 (RHNKRR) is interaction with RNA. Residues D202 and 240–243 (TKFE) contribute to the substrate site.

This sequence belongs to the class I-like SAM-binding methyltransferase superfamily. TrmB family.

It catalyses the reaction guanosine(46) in tRNA + S-adenosyl-L-methionine = N(7)-methylguanosine(46) in tRNA + S-adenosyl-L-homocysteine. The protein operates within tRNA modification; N(7)-methylguanine-tRNA biosynthesis. In terms of biological role, catalyzes the formation of N(7)-methylguanine at position 46 (m7G46) in tRNA. This Cupriavidus necator (strain ATCC 17699 / DSM 428 / KCTC 22496 / NCIMB 10442 / H16 / Stanier 337) (Ralstonia eutropha) protein is tRNA (guanine-N(7)-)-methyltransferase.